Consider the following 375-residue polypeptide: tRNA (guanine(26)-N(2))-dimethyltransferase (375 aa).

The region spanning 2 to 368 (KYITEGNTKL…AKLIDIVEFI (367 aa)) is the Trm1 methyltransferase domain. 5 residues coordinate S-adenosyl-L-methionine: Arg35, Arg66, Asp89, Asp116, and Ala117.

It belongs to the class I-like SAM-binding methyltransferase superfamily. Trm1 family.

The catalysed reaction is guanosine(26) in tRNA + 2 S-adenosyl-L-methionine = N(2)-dimethylguanosine(26) in tRNA + 2 S-adenosyl-L-homocysteine + 2 H(+). Functionally, dimethylates a single guanine residue at position 26 of a number of tRNAs using S-adenosyl-L-methionine as donor of the methyl groups. This chain is tRNA (guanine(26)-N(2))-dimethyltransferase, found in Methanococcus aeolicus (strain ATCC BAA-1280 / DSM 17508 / OCM 812 / Nankai-3).